Here is a 773-residue protein sequence, read N- to C-terminus: C-Maf-inducing protein (773 aa).

Residues 1 to 28 are disordered; it reads MDVTSSSGGGDPRQIEETKPLLGSDVSG. Residues 54–163 enclose the PH domain; that stretch reads LLQEGDIQVC…HSLQWKKKIY (110 aa). Serine 349, serine 377, serine 382, and serine 660 each carry phosphoserine. 4 LRR repeats span residues 663-686, 687-707, 712-732, and 736-756; these read NLEN…IKLP, SLKQ…RLLS, MLQV…LALS, and SLCS…EDLK.

In terms of assembly, interacts with FLNA.

The protein localises to the nucleus. It is found in the cytoplasm. Functionally, plays a role in T-cell signaling pathway. The polypeptide is C-Maf-inducing protein (Cmip) (Mus musculus (Mouse)).